A 420-amino-acid polypeptide reads, in one-letter code: Serine hydroxymethyltransferase (420 aa).

(6S)-5,6,7,8-tetrahydrofolate-binding positions include Leu121 and Gly125–Leu127. Lys229 bears the N6-(pyridoxal phosphate)lysine mark.

This sequence belongs to the SHMT family. In terms of assembly, homodimer. It depends on pyridoxal 5'-phosphate as a cofactor.

The protein localises to the cytoplasm. The catalysed reaction is (6R)-5,10-methylene-5,6,7,8-tetrahydrofolate + glycine + H2O = (6S)-5,6,7,8-tetrahydrofolate + L-serine. The protein operates within one-carbon metabolism; tetrahydrofolate interconversion. It functions in the pathway amino-acid biosynthesis; glycine biosynthesis; glycine from L-serine: step 1/1. Functionally, catalyzes the reversible interconversion of serine and glycine with tetrahydrofolate (THF) serving as the one-carbon carrier. This reaction serves as the major source of one-carbon groups required for the biosynthesis of purines, thymidylate, methionine, and other important biomolecules. Also exhibits THF-independent aldolase activity toward beta-hydroxyamino acids, producing glycine and aldehydes, via a retro-aldol mechanism. This chain is Serine hydroxymethyltransferase, found in Streptomyces coelicolor (strain ATCC BAA-471 / A3(2) / M145).